Reading from the N-terminus, the 281-residue chain is MGNSMKSTSPPSERPLSSSEGLESDFLAVLTDYPSPDISPPIFRRGEKLRVISDEGGWWKAISLSTGRESYIPGICVARVYHGWLFEGLGRDKAEELLQLPDTKIGSFMIRESETKKGFYSLSVRHRQVKHYRIFRLPNNWYYISPRLTFQCLEDLVTHYSEVADGLCCVLTTPCLAQNIPAPTSHPSPCTSPGSPVTLRQKTFDWKRVSRLQEGSEGAENPLRVDESLFSYGLRESIASYLSLTGDDSSSFDRKKKSLSLMYTGSKRKSSFFSAPQYFED.

The segment at 1 to 20 (MGNSMKSTSPPSERPLSSSE) is disordered. Gly2 is lipidated: N-myristoyl glycine. Over residues 7 to 20 (STSPPSERPLSSSE) the composition is skewed to low complexity. In terms of domain architecture, SH3 spans 22–82 (LESDFLAVLT…PGICVARVYH (61 aa)). An SH2 domain is found at 84–175 (WLFEGLGRDK…GLCCVLTTPC (92 aa)). The tract at residues 190–281 (CTSPGSPVTL…FFSAPQYFED (92 aa)) is SLA C-terminal. The residue at position 258 (Ser258) is a Phosphoserine. Tyr278 carries the post-translational modification Phosphotyrosine.

In terms of assembly, homodimer. Interacts with phosphorylated CBL, SYK and LAT. Homodimerization and interaction with phosphorylated CBL occurs via its C-terminal domain. Interacts with PDGFRB and EPHA2. Interacts with phosphorylated proteins ZAP70; CD3Z; VAV1 and LCP2 via its SH2 domain. As to expression, predominantly expressed in lymphoid tissues. Highly expressed in spleen, thymus and lymph nodes. Weakly expressed in lung and brain. Expressed in T-cells and at low level in B-cells.

It is found in the cytoplasm. The protein localises to the endosome. Adapter protein, which negatively regulates T-cell receptor (TCR) signaling. Inhibits T-cell antigen-receptor induced activation of nuclear factor of activated T-cells. Involved in the negative regulation of positive selection and mitosis of T-cells. May act by linking signaling proteins such as ZAP70 with CBL, leading to a CBL dependent degradation of signaling proteins. This chain is Src-like-adapter (Sla), found in Mus musculus (Mouse).